Reading from the N-terminus, the 592-residue chain is Actin-binding protein (592 aa).

At alanine 2 the chain carries N-acetylalanine. An ADF-H domain is found at 7-136 (DYTTHSREID…DENELLMKIS (130 aa)). Positions 144-155 (SIQTSSKQQGKA) are enriched in polar residues. Positions 144-541 (SIQTSSKQQG…KENPWATAEY (398 aa)) are disordered. Residue threonine 165 is modified to Phosphothreonine. A phosphoserine mark is found at serine 167 and serine 169. Position 181 is a phosphothreonine (threonine 181). Position 183 is a phosphoserine (serine 183). The stretch at 200–209 (DDDWNEPELK) is repeat 1. Residues 200–575 (DDDWNEPELK…DDDWWLGELE (376 aa)) are 3 X 10 AA approximate repeats (acidic). Composition is skewed to basic and acidic residues over residues 237-248 (IAEEKAKEDPRL) and 270-279 (NESKLKRDSE). Residues 280–296 (FNSFLGTTKPPSMTESS) are compositionally biased toward polar residues. Over residues 297–312 (LKNDDDKVIKGFRNEK) the composition is skewed to basic and acidic residues. Serine 313 is modified (phosphoserine). Composition is skewed to basic and acidic residues over residues 332–341 (TKAEAPKPEV) and 350–359 (PDVKDLKSKF). Phosphoserine is present on residues serine 365 and serine 389. Over residues 398–414 (EPVKAEEAEQPKTDYKK) the composition is skewed to basic and acidic residues. A compositionally biased stretch (acidic residues) spans 427–446 (DNEEEPEENDDDWDDDEDEA). Repeat unit 2 spans residues 436 to 445 (DDDWDDDEDE). Serine 458 carries the phosphoserine modification. Lysine 464 participates in a covalent cross-link: Glycyl lysine isopeptide (Lys-Gly) (interchain with G-Cter in ubiquitin). Serine 481 bears the Phosphoserine mark. Acidic residues predominate over residues 490–505 (APEQAPEEEIEEEAEE). Low complexity predominate over residues 506–516 (AAPQLPSRSSA). Positions 532–592 (KENPWATAEY…FPSNYVSLGN (61 aa)) constitute an SH3 domain. Repeat 3 spans residues 566–575 (DDDWWLGELE).

This sequence belongs to the ABP1 family. In terms of assembly, binds F-actin, but not G-actin. Interacts with the ARP2/3 complex. Interacts with APP1, ARK1, PRK1, SCP1, SRV2 and YIR003W via its SH3 domain. Interacts with the SH3 domain of RVS167 and with SLA1. The actin depolymerizing factor homology (ADF) domain mediates actin filament binding.

The protein resides in the cytoplasm. It is found in the cytoskeleton. It localises to the actin patch. Its function is as follows. Regulates ARP2/3 complex-mediated actin assembly. Recruits ARP2/3 complex to sides of preexisting actin filaments, which may promote nucleation or stabilization of filament branches. Binds to actin filaments, but not actin monomers. Actin binding is required for ARP2/3 complex activation. May also have a role in linking the actin cytoskeleton to endocytosis. recruits components of the endocytotic machinery to cortical actin patches, known sites of endocytosis. This Saccharomyces cerevisiae (strain ATCC 204508 / S288c) (Baker's yeast) protein is Actin-binding protein (ABP1).